The chain runs to 429 residues: Serine--tRNA ligase (429 aa).

236 to 238 (TGE) is a binding site for L-serine. Residue 267–269 (RSE) coordinates ATP. Glu-290 is an L-serine binding site. 354–357 (EISS) contributes to the ATP binding site. Residue Ser-390 participates in L-serine binding.

This sequence belongs to the class-II aminoacyl-tRNA synthetase family. Type-1 seryl-tRNA synthetase subfamily. As to quaternary structure, homodimer. The tRNA molecule binds across the dimer.

Its subcellular location is the cytoplasm. It carries out the reaction tRNA(Ser) + L-serine + ATP = L-seryl-tRNA(Ser) + AMP + diphosphate + H(+). The catalysed reaction is tRNA(Sec) + L-serine + ATP = L-seryl-tRNA(Sec) + AMP + diphosphate + H(+). It functions in the pathway aminoacyl-tRNA biosynthesis; selenocysteinyl-tRNA(Sec) biosynthesis; L-seryl-tRNA(Sec) from L-serine and tRNA(Sec): step 1/1. In terms of biological role, catalyzes the attachment of serine to tRNA(Ser). Is also able to aminoacylate tRNA(Sec) with serine, to form the misacylated tRNA L-seryl-tRNA(Sec), which will be further converted into selenocysteinyl-tRNA(Sec). The polypeptide is Serine--tRNA ligase (Vesicomyosocius okutanii subsp. Calyptogena okutanii (strain HA)).